Consider the following 230-residue polypeptide: Pyridoxal phosphate homeostasis protein (230 aa).

Residue lysine 36 is modified to N6-(pyridoxal phosphate)lysine.

The protein belongs to the pyridoxal phosphate-binding protein YggS/PROSC family.

Functionally, perhaps involved in proline biosynthesis. In terms of biological role, pyridoxal 5'-phosphate (PLP)-binding protein, which is involved in PLP homeostasis. In Pseudomonas aeruginosa (strain ATCC 15692 / DSM 22644 / CIP 104116 / JCM 14847 / LMG 12228 / 1C / PRS 101 / PAO1), this protein is Pyridoxal phosphate homeostasis protein.